The following is an 830-amino-acid chain: Probable mixed-linked glucan synthase 7 (830 aa).

2 helical membrane-spanning segments follow: residues 61–81 and 98–118; these read LTIFVRIAIFVLFFKWRITYA and AATFWTASIAGELWFAFMWVL. The active site involves aspartate 186. Residues 251-279 are a coiled coil; that stretch reads ELVRDRRRVRREYEEMRLRIDALQAADAR. Residues aspartate 367 and aspartate 369 each contribute to the substrate site. The active site involves aspartate 529. A run of 6 helical transmembrane segments spans residues 613–633, 638–658, 676–696, 735–755, 776–796, and 805–825; these read LFLMAYCLFPAIPLIAGGGGW, TPTYVAFLAALMVTLAAVAVL, FWMVSATSAYLAAVAQVALKV, ALMAPTAAALAVNVASMAAAG, LPVAFNVWVVVHLYPFALGLM, and PILFLFAVVAYLAVRFLCLLL.

Belongs to the glycosyltransferase 2 family. Plant cellulose synthase-like F subfamily. Expressed in mature pollen.

It is found in the golgi apparatus membrane. Its function is as follows. May catalyze both beta-1,3 and beta-1,4 glycosidic linkage on beta-D-glucan. Essential for (1,3;1,4)-beta-D-glucans synthesis in grasses and cereals (Poaceae). The mixed-linked glucans (which are not present in walls of dicotyledons or most other monocotyledonous plants) are particularly important constituents of the walls of the starchy endosperm and aleurone cells of cereal grains such as oats, wheat, rice and barley. They can account for up to 70% by weight of the wall. The chain is Probable mixed-linked glucan synthase 7 (CSLF7) from Oryza sativa subsp. japonica (Rice).